Here is a 394-residue protein sequence, read N- to C-terminus: Probable ribosome production factor 1 (394 aa).

Disordered regions lie at residues 1-98 and 116-152; these read MIKI…PVLN and MKKEKHKKKMQERRARRKAGVPANPGHTIESLREKDQ. Acidic residues-rich tracts occupy residues 15 to 33 and 59 to 88; these read QDSDSDSSFDEEEPQDLEV and ASEDLKEEDDDDDEEENDDDDEEEDDDDDD. The segment covering 116 to 134 has biased composition (basic residues); it reads MKKEKHKKKMQERRARRKA. The region spanning 185-369 is the Brix domain; that stretch reads PKVLITFADN…LRSLQEGTFD (185 aa). The RNA-binding stretch occupies residues 347–364; the sequence is VKLRELGPRFTLKLRSLQ.

Its subcellular location is the nucleus. The protein localises to the nucleolus. In terms of biological role, may be required for ribosome biogenesis. This Drosophila melanogaster (Fruit fly) protein is Probable ribosome production factor 1.